The chain runs to 880 residues: Valine--tRNA ligase (880 aa).

Positions 46–56 (PNVTGKLHLGH) match the 'HIGH' region motif. The short motif at 520–524 (KMSKS) is the 'KMSKS' region element. Residue K523 participates in ATP binding. Residues 808 to 880 (LAGLINIEEE…KARIAELKEN (73 aa)) adopt a coiled-coil conformation.

Belongs to the class-I aminoacyl-tRNA synthetase family. ValS type 1 subfamily. Monomer.

It localises to the cytoplasm. It catalyses the reaction tRNA(Val) + L-valine + ATP = L-valyl-tRNA(Val) + AMP + diphosphate. Catalyzes the attachment of valine to tRNA(Val). As ValRS can inadvertently accommodate and process structurally similar amino acids such as threonine, to avoid such errors, it has a 'posttransfer' editing activity that hydrolyzes mischarged Thr-tRNA(Val) in a tRNA-dependent manner. This is Valine--tRNA ligase from Lactococcus lactis subsp. lactis (strain IL1403) (Streptococcus lactis).